A 247-amino-acid chain; its full sequence is 3,4-dihydroxy-2-butanone 4-phosphate synthase (247 aa).

D-ribulose 5-phosphate-binding positions include 38 to 39 (RE), aspartate 43, 179 to 183 (RMGQT), and glutamate 203. Glutamate 39 is a binding site for Mg(2+).

This sequence belongs to the DHBP synthase family. As to quaternary structure, homodimer. Mg(2+) serves as cofactor. Requires Mn(2+) as cofactor.

It carries out the reaction D-ribulose 5-phosphate = (2S)-2-hydroxy-3-oxobutyl phosphate + formate + H(+). The protein operates within cofactor biosynthesis; riboflavin biosynthesis; 2-hydroxy-3-oxobutyl phosphate from D-ribulose 5-phosphate: step 1/1. Catalyzes the conversion of D-ribulose 5-phosphate to formate and 3,4-dihydroxy-2-butanone 4-phosphate. The protein is 3,4-dihydroxy-2-butanone 4-phosphate synthase of Methanosarcina acetivorans (strain ATCC 35395 / DSM 2834 / JCM 12185 / C2A).